The chain runs to 236 residues: uncharacterized protein (236 aa).

Residues 1–73 (MEPGGSENAA…GGGWGWGNTQ (73 aa)) form a disordered region.

This is an uncharacterized protein from Homo sapiens (Human).